The sequence spans 640 residues: Threonine--tRNA ligase (640 aa).

Residues 1–61 (MPTITLPDGS…THDATLQIIT (61 aa)) enclose the TGS domain. A catalytic region spans residues 242 to 533 (DHRKIGKQLD…LIEHYAGVFP (292 aa)). Cys-333, His-384, and His-510 together coordinate Zn(2+).

This sequence belongs to the class-II aminoacyl-tRNA synthetase family. Homodimer. Zn(2+) is required as a cofactor.

Its subcellular location is the cytoplasm. The enzyme catalyses tRNA(Thr) + L-threonine + ATP = L-threonyl-tRNA(Thr) + AMP + diphosphate + H(+). Functionally, catalyzes the attachment of threonine to tRNA(Thr) in a two-step reaction: L-threonine is first activated by ATP to form Thr-AMP and then transferred to the acceptor end of tRNA(Thr). Also edits incorrectly charged L-seryl-tRNA(Thr). The chain is Threonine--tRNA ligase from Pseudomonas putida (strain W619).